The chain runs to 570 residues: DNA polymerase/3'-5' exonuclease PolX (570 aa).

The interval 1–315 is DNA polymerase type-X; that stretch reads MHKKDIIRLL…PLIPPEIRES (315 aa). Residues D193, D195, and D240 each contribute to the a divalent metal cation site. The tract at residues 333 to 570 is 3'-5' exonuclease; sequence QIKGDLHMHS…DVEAFLKRND (238 aa). Mn(2+) is bound by residues H339, H341, H371, E410, H437, H465, D526, and H528.

It in the N-terminal section; belongs to the DNA polymerase type-X family. In the C-terminal section; belongs to the PHP family. As to quaternary structure, monomer. It depends on Mn(2+) as a cofactor. Mg(2+) is required as a cofactor.

The catalysed reaction is DNA(n) + a 2'-deoxyribonucleoside 5'-triphosphate = DNA(n+1) + diphosphate. The enzyme catalyses Exonucleolytic cleavage in the 3'- to 5'-direction to yield nucleoside 5'-phosphates.. With respect to regulation, the polymerization activity is inhibited in the presence of 2'-3'-dideoxynucleoside 5'-triphosphate (ddNTP). Functionally, strictly DNA-template-directed DNA polymerase, preferentially acting on DNA structures containing gaps from one to a few nucleotides and bearing a phosphate group at the 5' end of the downstream DNA. The fact that PolX is able to conduct filling of a single-nucleotide gap, allowing further sealing of the resulting nick by a DNA ligase, points to a putative role in base excision repair (BER) during the B.subtilis life cycle. Moreover, also possesses a 3'-5' exonuclease activity able to edit unpaired 3'-termini in a gapped DNA substrate and likely involved in resecting unannealed 3'-termini during DNA repair. The same PolX molecule could perform the subsequent gap-filling step. Does not display 5'-deoxyribose 5'-phosphate (dRP) lyase activity, as predicted by the lack of the lysine and tyrosine residues responsible for the dRP lyase activity in some other PolX members. This is DNA polymerase/3'-5' exonuclease PolX (polX) from Bacillus subtilis (strain 168).